Reading from the N-terminus, the 150-residue chain is Classical arabinogalactan protein 6 (150 aa).

A signal peptide spans Met-1–Ala-20. 2 stretches are compositionally biased toward low complexity: residues Phe-19 to Ala-75 and Ser-85 to Val-98. The disordered stretch occupies residues Phe-19–Thr-131. Ser-126 is lipidated: GPI-anchor amidated serine. Residues Gly-127–Phe-150 constitute a propeptide, removed in mature form.

Belongs to the classical AGP family. Post-translationally, O-glycosylated on the hydroxyproline residues. In terms of tissue distribution, expressed in the anthers.

The protein localises to the cell membrane. Proteoglycan that seems to be implicated in diverse developmental roles such as differentiation, cell-cell recognition, embryogenesis and programmed cell death. Plays an important role during the formation of the nexine layer of the pollen wall. The sequence is that of Classical arabinogalactan protein 6 (AGP6) from Arabidopsis thaliana (Mouse-ear cress).